The primary structure comprises 821 residues: Probable E3 ubiquitin-protein ligase hulA (821 aa).

In terms of domain architecture, C2 spans M1 to R112. Disordered stretches follow at residues P140 to R240 and R255 to D359. Polar residues-rich tracts occupy residues A151–P173, A181–T201, Q217–D228, and R255–R272. Positions G231 to S264 constitute a WW 1 domain. Residues L281–T296 show a composition bias toward basic and acidic residues. The span at G297–S306 shows a compositional bias: polar residues. The span at P311–G339 shows a compositional bias: low complexity. WW domains follow at residues G339–R372 and G399–L432. The HECT domain maps to S488–E821. The Glycyl thioester intermediate role is filled by C789.

Belongs to the RSP5/NEDD4 family. As to quaternary structure, interacts with creD.

It localises to the cytoplasm. It catalyses the reaction S-ubiquitinyl-[E2 ubiquitin-conjugating enzyme]-L-cysteine + [acceptor protein]-L-lysine = [E2 ubiquitin-conjugating enzyme]-L-cysteine + N(6)-ubiquitinyl-[acceptor protein]-L-lysine.. Its pathway is protein modification; protein ubiquitination. E3 ubiquitin-protein ligase which accepts ubiquitin from an E2 ubiquitin-conjugating enzyme in the form of a thioester and then directly transfers the ubiquitin to targeted substrates. Probably involved in the regulatory network controlling carbon source utilization. The sequence is that of Probable E3 ubiquitin-protein ligase hulA (hulA) from Aspergillus niger (strain ATCC MYA-4892 / CBS 513.88 / FGSC A1513).